The primary structure comprises 116 residues: Acyl-CoA-binding protein homolog 3 (116 aa).

The region spanning 3-92 (LQEKFDAAVE…LNDMFDKIAE (90 aa)) is the ACB domain. An acyl-CoA is bound by residues 34 to 38 (YSLFK), Lys60, and Tyr79.

This sequence belongs to the ACBP family.

Binds medium- and long-chain acyl-CoA esters with very high affinity and may function as an intracellular carrier of acyl-CoA esters. This is Acyl-CoA-binding protein homolog 3 (acbp-3) from Caenorhabditis elegans.